A 335-amino-acid polypeptide reads, in one-letter code: NADH-quinone oxidoreductase subunit H (335 aa).

8 consecutive transmembrane segments (helical) span residues 11–31, 81–101, 114–134, 154–174, 187–207, 238–258, 270–290, and 307–327; these read VILT…AGAL, VIFT…FAII, IGLL…LFAG, VSYE…VGSF, LWFI…GVAV, FFVG…TLFF, QLSF…FILL, and WKFC…VVLW.

The protein belongs to the complex I subunit 1 family. As to quaternary structure, NDH-1 is composed of 13 different subunits. Subunits NuoA, H, J, K, L, M, N constitute the membrane sector of the complex.

The protein resides in the cell inner membrane. The enzyme catalyses a quinone + NADH + 5 H(+)(in) = a quinol + NAD(+) + 4 H(+)(out). In terms of biological role, NDH-1 shuttles electrons from NADH, via FMN and iron-sulfur (Fe-S) centers, to quinones in the respiratory chain. The immediate electron acceptor for the enzyme in this species is believed to be ubiquinone. Couples the redox reaction to proton translocation (for every two electrons transferred, four hydrogen ions are translocated across the cytoplasmic membrane), and thus conserves the redox energy in a proton gradient. This subunit may bind ubiquinone. This Pseudomonas fluorescens (strain ATCC BAA-477 / NRRL B-23932 / Pf-5) protein is NADH-quinone oxidoreductase subunit H.